The sequence spans 568 residues: Archaeosine synthase subunit alpha (568 aa).

Positions 496–565 (YDALKSYWVK…AKKGVAVKVR (70 aa)) constitute a PUA domain.

It belongs to the archaeosine synthase type 1 family. As to quaternary structure, forms a robust complex with the archaeosine synthase beta subunit RaSEA, likely an alpha(2)beta(2) heterotetrameric structure. Formation of this complex highly increases lysine transfer activity.

The enzyme catalyses 7-cyano-7-carbaguanosine(15) in tRNA + L-lysine = 7-N-[(5S)-5-amino-5-carboxypentyl]formamidino-7-deazaguanosine(15) in tRNA. Its pathway is tRNA modification; archaeosine-tRNA biosynthesis. Functionally, functions in the biosynthesis of archaeosine, a modified nucleoside present in the dihydrouridine loop (D-loop) of archaeal tRNAs. Catalyzes the addition of L-lysine to the cyano group of 7-cyano-7-deazaguanine (preQ0)-modified tRNAs at position 15, to generate q0kN15-tRNA, a q0N lysine adduct identified as 7-N-[(5S)-5-amino-5-carboxypentyl]formamidino-7-deazaguanosine. The protein is Archaeosine synthase subunit alpha of Thermococcus kodakarensis (strain ATCC BAA-918 / JCM 12380 / KOD1) (Pyrococcus kodakaraensis (strain KOD1)).